Consider the following 296-residue polypeptide: Cyclin-dependent kinase 1 (296 aa).

In terms of domain architecture, Protein kinase spans 10–288; the sequence is YQKLEKLGEG…AKEALLHPYF (279 aa). ATP-binding positions include 16–24 and Lys-39; that span reads LGEGTYGKV. Thr-20 carries the phosphothreonine modification. Tyr-21 is modified (phosphotyrosine). The active-site Proton acceptor is Asp-129. At Thr-162 the chain carries Phosphothreonine; by CAK.

The protein belongs to the protein kinase superfamily. CMGC Ser/Thr protein kinase family. CDC2/CDKX subfamily. In terms of assembly, forms a stable but non-covalent complex with a regulatory subunit and with a cyclin.

The enzyme catalyses L-seryl-[protein] + ATP = O-phospho-L-seryl-[protein] + ADP + H(+). It carries out the reaction L-threonyl-[protein] + ATP = O-phospho-L-threonyl-[protein] + ADP + H(+). The catalysed reaction is [DNA-directed RNA polymerase] + ATP = phospho-[DNA-directed RNA polymerase] + ADP + H(+). With respect to regulation, phosphorylation at Thr-20 or Tyr-21 inactivates the enzyme, while phosphorylation at Thr-162 activates it. In terms of biological role, plays a key role in the control of the eukaryotic cell cycle. Required for entry into S-phase and mitosis. p34 is a component of the kinase complex that phosphorylates the repetitive C-terminus of RNA polymerase II. This is Cyclin-dependent kinase 1 (cdk1) from Dictyostelium discoideum (Social amoeba).